The following is a 529-amino-acid chain: Aldehyde dehydrogenase 1 (529 aa).

Residue 251-256 coordinates NAD(+); sequence GSTYVG. Catalysis depends on residues Glu273 and Cys307.

The protein belongs to the aldehyde dehydrogenase family.

It catalyses the reaction an aldehyde + NAD(+) + H2O = a carboxylate + NADH + 2 H(+). The protein is Aldehyde dehydrogenase 1 of Entamoeba histolytica (strain ATCC 30459 / HM-1:IMSS / ABRM).